Here is a 1560-residue protein sequence, read N- to C-terminus: BRD4-interacting chromatin-remodeling complex-associated protein (1560 aa).

Disordered regions lie at residues 53 to 99 (VQEA…GADQ), 624 to 688 (APQA…ATPT), 723 to 949 (IVSA…VTTP), 974 to 1028 (NKAG…TGLP), 1049 to 1075 (KAAS…KPPT), and 1215 to 1300 (SSEG…IKTY). A compositionally biased stretch (gly residues) spans 86–96 (ATGGGGGGSGG). Positions 624–664 (APQAPPAVSTPLPLGLQQPQAQQPPQAPTPQAAAPPQATTP) are enriched in low complexity. Residues 726 to 736 (APPPAQDPAPA) are compositionally biased toward pro residues. A compositionally biased stretch (low complexity) spans 747-780 (PQAPDSQASPAPAPQIPAAAPLKGPGPSSSPSLP). Composition is skewed to pro residues over residues 791–806 (LPSP…PPSR), 814–831 (PSEP…PPTL), and 843–880 (VPPP…PHLP). A compositionally biased stretch (low complexity) spans 881-896 (PSSTSSAVASSSETSS). Serine 919 is modified (phosphoserine). At threonine 921 the chain carries Phosphothreonine. Residues 932 to 941 (PAAPPPPPPR) are compositionally biased toward pro residues. The segment covering 1005 to 1028 (APSGTPTAPSHAPAPAPMAATGLP) has biased composition (low complexity). N6-acetyllysine is present on lysine 1057. Polar residues predominate over residues 1227–1236 (LSSSAPGAST). The span at 1264 to 1281 (ASSSLSSSSSSSSAASSL) shows a compositional bias: low complexity. Lysine 1313 is covalently cross-linked (Glycyl lysine isopeptide (Lys-Gly) (interchain with G-Cter in SUMO2)). 2 disordered regions span residues 1324 to 1424 (NTAL…VDEA) and 1440 to 1560 (YQRM…TLTR). Residues 1331-1356 (HQPPPPPATLKVAEPPPRPPPPPPPT) show a composition bias toward pro residues. The span at 1401–1412 (PEGTPAGRARGG) shows a compositional bias: low complexity. Serine 1413 is subject to Phosphoserine. Polar residues predominate over residues 1485-1515 (ASFSSDSPQDDTLTEHLQSAIDSILNLQQAP).

Component of the multiprotein chromatin-remodeling complexes SWI/SNF: SWI/SNF-A (BAF), SWI/SNF-B (PBAF) and related complexes. The canonical complex contains a catalytic subunit (either SMARCA4/BRG1/BAF190A or SMARCA2/BRM/BAF190B) and at least SMARCE1, ACTL6A/BAF53, SMARCC1/BAF155, SMARCC2/BAF170, and SMARCB1/SNF5/BAF47. Other subunits specific to each of the complexes may also be present permitting several possible combinations developmentally and tissue specific. Component of the SWI/SNF (GBAF) subcomplex, which includes at least BICRA or BICRAL (mutually exclusive), BRD9, SS18, the core BAF subunits, SMARCA2/BRM, SMARCA4/BRG1/BAF190A, ACTL6A/BAF53, SMARCC1/BAF155, and SMARCD1/BAF60A. Interacts with BRD4; the interaction bridges BRD4 to the GBAF complex. Expressed at moderate levels in heart, brain, placenta, skeletal muscle, and pancreas, and at lower levels in lung, liver and kidney.

Its subcellular location is the nucleus. Its function is as follows. Component of SWI/SNF chromatin remodeling subcomplex GBAF that carries out key enzymatic activities, changing chromatin structure by altering DNA-histone contacts within a nucleosome in an ATP-dependent manner. May play a role in BRD4-mediated gene transcription. This chain is BRD4-interacting chromatin-remodeling complex-associated protein, found in Homo sapiens (Human).